Here is a 196-residue protein sequence, read N- to C-terminus: Ribonuclease HII (196 aa).

In terms of domain architecture, RNase H type-2 spans 15–196 (YIVAGIDEAG…RKSFRYSCFI (182 aa)). A divalent metal cation contacts are provided by D21, E22, and D112.

It belongs to the RNase HII family. Mn(2+) is required as a cofactor. Mg(2+) serves as cofactor.

It localises to the cytoplasm. The enzyme catalyses Endonucleolytic cleavage to 5'-phosphomonoester.. In terms of biological role, endonuclease that specifically degrades the RNA of RNA-DNA hybrids. The sequence is that of Ribonuclease HII from Rickettsia canadensis (strain McKiel).